The sequence spans 210 residues: Putative O-methyltransferase MSMEG_5073/MSMEI_4947 (210 aa).

Residues valine 37, glutamate 59, 61–62 (GT), serine 67, aspartate 85, and valine 86 each bind S-adenosyl-L-methionine. Aspartate 133 is a binding site for substrate. Position 135 (aspartate 135) interacts with S-adenosyl-L-methionine.

Belongs to the class I-like SAM-binding methyltransferase superfamily. Cation-dependent O-methyltransferase family.

The protein is Putative O-methyltransferase MSMEG_5073/MSMEI_4947 of Mycolicibacterium smegmatis (strain ATCC 700084 / mc(2)155) (Mycobacterium smegmatis).